Consider the following 48-residue polypeptide: Large ribosomal subunit protein eL40 (48 aa).

Belongs to the eukaryotic ribosomal protein eL40 family.

This is Large ribosomal subunit protein eL40 from Methanobrevibacter smithii (strain ATCC 35061 / DSM 861 / OCM 144 / PS).